A 780-amino-acid polypeptide reads, in one-letter code: Cullin-5 (780 aa).

A Phosphoserine modification is found at S34. The residue at position 210 (T210) is a Phosphothreonine. Positions 711–772 (RILRTQEAII…HRYIRRDEAD (62 aa)) constitute a Cullin neddylation domain. K724 is covalently cross-linked (Glycyl lysine isopeptide (Lys-Gly) (interchain with G-Cter in NEDD8)).

This sequence belongs to the cullin family. As to quaternary structure, component of multiple cullin-5-RING E3 ubiquitin-protein ligase complexes (ECS complexes, also named CRL5 complexes) formed of CUL5, Elongin BC (ELOB and ELOC), RNF7/RBX2 and a variable SOCS box domain-containing protein as substrate-specific recognition component. CUL5-containing ECS complexes specifically contain RNF7/RBX2, and not RBX1, as catalytic subunit. Component of the ECS(ASB2) complex with the substrate recognition component ASB2. Component of the ECS(ASB6) complex with the substrate recognition component ASB6. Component of the ECS(ASB7) complex with the substrate recognition component ASB7. Component of the ECS(ASB9) complex with the substrate recognition component ASB9. Component of the ECS(ASB11) complex with the substrate recognition component ASB11. Component of the ECS(ASB12) complex with the substrate recognition component ASB12. Component of the ECS(LRRC41) complex with the substrate recognition component LRRC41. Component of the ECS(SOCS1) complex with the substrate recognition component SOCS1. Component of the ECS(SOCS2) complex with the substrate recognition component SOCS2. Component of the ECS(WSB1) complex with the substrate recognition subunit WSB1. Component of the ECS(SOCS3) complex with the substrate recognition component SOCS3. Component of the ECS(SOCS7) complex with the substrate recognition component SOCS7. Component of the ECS(SPSB1) complex with the substrate recognition component SPSB1. Component of the ECS(SPSB3) complex with the substrate recognition component SPSB3. Component of the ECS(SPSB2) complex with the substrate recognition component SPSB2. Component of the ECS(SPSB4) complex with the substrate recognition component SPSB4. Component of the ECS(RAB40) complex with the substrate recognition subunit RAB40A, RAB40B or RAB40C. Component of the ECS(KLHDC1) complex with the substrate recognition component KLHDC1. Component of the ECS(PCMTD1) complex with the substrate recognition subunit PCMTD1. May also form complexes containing RBX1 and ELOA or VHL; additional evidence is however required to confirm this result in vivo. Interacts (when neddylated) with ARIH2; leading to activate the E3 ligase activity of ARIH2. Interacts with ERCC6; the interaction is induced by DNA damaging agents or inhibitors of RNA polymerase II elongation. Interacts with ELOA (via the BC-box). Interacts (unneddylated form) with DCUN1D1, DCUN1D2, DCUN1D3, DCUN1D4 and DCUN1D5; these interactions promote the cullin neddylation. Post-translationally, neddylated; which enhances the ubiquitination activity of ECS complexes and prevents binding of the inhibitor CAND1. Deneddylated via its interaction with the COP9 signalosome (CSN).

The protein resides in the nucleus. It participates in protein modification; protein ubiquitination. Functionally, core component of multiple cullin-5-RING E3 ubiquitin-protein ligase complexes (ECS complexes, also named CRL5 complexes), which mediate the ubiquitination and subsequent proteasomal degradation of target proteins. Acts a scaffold protein that contributes to catalysis through positioning of the substrate and the ubiquitin-conjugating enzyme. The functional specificity of the E3 ubiquitin-protein ligase complex depends on the variable SOCS box-containing substrate recognition component. Acts as a key regulator of neuron positioning during cortex development: component of various SOCS-containing ECS complexes, such as the ECS(SOCS7) complex, that regulate reelin signaling by mediating ubiquitination and degradation of DAB1. ECS(SOCS1) seems to direct ubiquitination of JAK2. The ECS(SOCS2) complex mediates the ubiquitination and subsequent proteasomal degradation of phosphorylated EPOR and GHR. The ECS(SPSB3) complex catalyzes ubiquitination of nuclear CGAS. ECS(KLHDC1) complex is part of the DesCEND (destruction via C-end degrons) pathway and mediates ubiquitination and degradation of truncated SELENOS selenoprotein produced by failed UGA/Sec decoding, which ends with a glycine. The ECS(ASB9) complex mediates ubiquitination and degradation of CKB. As part of some ECS complex, promotes 'Lys-11'-linked ubiquitination and degradation of BTRC. As part of a multisubunit ECS complex, polyubiquitinates monoubiquitinated POLR2A. As part of the ECS(RAB40C) complex, mediates ANKRD28 ubiquitination and degradation, thereby regulating protein phosphatase 6 (PP6) complex activity and focal adhesion assembly during cell migration. As part of the ECS(RAB40A) complex, mediates RHOU 'Lys-48'-linked ubiquitination and degradation, thus inhibiting focal adhesion disassembly during cell migration. As part of the ECS(RAB40B) complex, mediates LIMA1/EPLIN and RAP2 ubiquitination, thereby regulating actin cytoskeleton dynamics and stress fiber formation during cell migration. May form a cell surface vasopressin receptor. This Mus musculus (Mouse) protein is Cullin-5.